Reading from the N-terminus, the 391-residue chain is Septation protein etd1 (391 aa).

A disordered region spans residues 49-68 (MKSYGSDITPRRPKQLGLPK).

Its function is as follows. Involved in septation. The polypeptide is Septation protein etd1 (etd1) (Schizosaccharomyces pombe (strain 972 / ATCC 24843) (Fission yeast)).